The following is a 470-amino-acid chain: Ubiquitin carboxyl-terminal hydrolase calypso (470 aa).

The UCH catalytic domain maps to 43 to 274 (GWLELESDPG…IRFNLMAVVP (232 aa)). The active-site Nucleophile is the cysteine 129. The active-site Proton donor is histidine 211. The tract at residues 305-324 (DEQGEGGNGDPQRPDTPSTL) is disordered. Residues 373 to 401 (NYDKFICTFLSMLAHQGVLGELVSQHLLP) enclose the ULD domain. Positions 403-470 (KKISGQSAAN…KGRNKCKKRK (68 aa)) are positively charged C-terminal tail required for binding nucleosomes. Over residues 422-451 (ANAGATAAGAAGAAPKSQQQQAAAAKNGKS) the composition is skewed to low complexity. The interval 422–470 (ANAGATAAGAAGAAPKSQQQQAAAAKNGKSPSKTPGRRRKGRNKCKKRK) is disordered. A compositionally biased stretch (basic residues) spans 456 to 470 (PGRRRKGRNKCKKRK).

It belongs to the peptidase C12 family. BAP1 subfamily. As to quaternary structure, catalytic component of the polycomb repressive deubiquitinase (PR-DUB) complex, at least composed of caly/calypso, Asx and sba (MBD5/6 homolog). The PR-DUB complex associates with nucleosomes to mediate deubiquitination of histone H2AK118ub1 substrates; the association requires the positively charged C-terminal tail of caly, probably due to direct binding of DNA. Interacts (via ULD domain) with Asx (via DEUBAD domain); the interaction produces a stable heterodimer with a composite binding site for ubiquitin. Homodimerizes (via coiled-coil hinge-region between the UCH and ULD domains) to mediate assembly of 2 copies of the caly-Asx heterodimer into a bisymmetric tetramer; dimerization enhances PR-DUB association with nucleosomes.

It localises to the nucleus. The catalysed reaction is Thiol-dependent hydrolysis of ester, thioester, amide, peptide and isopeptide bonds formed by the C-terminal Gly of ubiquitin (a 76-residue protein attached to proteins as an intracellular targeting signal).. Functionally, catalytic component of the polycomb repressive deubiquitinase (PR-DUB) complex, a complex that specifically mediates deubiquitination of histone H2A monoubiquitinated at 'Lys-119' (H2AK118ub1). Mediates bisymmetric organization of the PR-DUB complex and is involved in association with nucleosomes to mediate deubiquitination. Does not deubiquitinate monoubiquitinated histone H2B. Required to maintain the transcriptionally repressive state of homeotic genes throughout development. The PR-DUB complex has weak or no activity toward 'Lys-48'- and 'Lys-63'-linked polyubiquitin chains. Polycomb group (PcG) protein. This Drosophila ananassae (Fruit fly) protein is Ubiquitin carboxyl-terminal hydrolase calypso.